A 101-amino-acid chain; its full sequence is Urease subunit beta (101 aa).

It belongs to the urease beta subunit family. As to quaternary structure, heterotrimer of UreA (gamma), UreB (beta) and UreC (alpha) subunits. Three heterotrimers associate to form the active enzyme.

It localises to the cytoplasm. The enzyme catalyses urea + 2 H2O + H(+) = hydrogencarbonate + 2 NH4(+). It functions in the pathway nitrogen metabolism; urea degradation; CO(2) and NH(3) from urea (urease route): step 1/1. This chain is Urease subunit beta, found in Psychromonas ingrahamii (strain DSM 17664 / CCUG 51855 / 37).